The chain runs to 505 residues: Maturase K (505 aa).

This sequence belongs to the intron maturase 2 family. MatK subfamily.

It is found in the plastid. It localises to the chloroplast. Its function is as follows. Usually encoded in the trnK tRNA gene intron. Probably assists in splicing its own and other chloroplast group II introns. This Nuphar variegata (Yellow pond lily) protein is Maturase K.